We begin with the raw amino-acid sequence, 378 residues long: Erythronate-4-phosphate dehydrogenase (378 aa).

Substrate-binding residues include serine 45 and threonine 66. 2 residues coordinate NAD(+): aspartate 146 and threonine 175. Arginine 208 is a catalytic residue. An NAD(+)-binding site is contributed by aspartate 232. Glutamate 237 is an active-site residue. The active-site Proton donor is histidine 254. Glycine 257 contacts NAD(+). Tyrosine 258 provides a ligand contact to substrate.

Belongs to the D-isomer specific 2-hydroxyacid dehydrogenase family. PdxB subfamily. Homodimer.

The protein localises to the cytoplasm. It carries out the reaction 4-phospho-D-erythronate + NAD(+) = (R)-3-hydroxy-2-oxo-4-phosphooxybutanoate + NADH + H(+). Its pathway is cofactor biosynthesis; pyridoxine 5'-phosphate biosynthesis; pyridoxine 5'-phosphate from D-erythrose 4-phosphate: step 2/5. Functionally, catalyzes the oxidation of erythronate-4-phosphate to 3-hydroxy-2-oxo-4-phosphonooxybutanoate. The polypeptide is Erythronate-4-phosphate dehydrogenase (Pectobacterium carotovorum subsp. carotovorum (strain PC1)).